The sequence spans 318 residues: Transaldolase (318 aa).

K132 functions as the Schiff-base intermediate with substrate in the catalytic mechanism.

This sequence belongs to the transaldolase family. Type 1 subfamily. Homodimer.

The protein localises to the cytoplasm. The enzyme catalyses D-sedoheptulose 7-phosphate + D-glyceraldehyde 3-phosphate = D-erythrose 4-phosphate + beta-D-fructose 6-phosphate. It functions in the pathway carbohydrate degradation; pentose phosphate pathway; D-glyceraldehyde 3-phosphate and beta-D-fructose 6-phosphate from D-ribose 5-phosphate and D-xylulose 5-phosphate (non-oxidative stage): step 2/3. Its function is as follows. Transaldolase is important for the balance of metabolites in the pentose-phosphate pathway. The polypeptide is Transaldolase (Shewanella baltica (strain OS155 / ATCC BAA-1091)).